Reading from the N-terminus, the 308-residue chain is Ribonuclease Z (308 aa).

The Zn(2+) site is built by His63, His65, Asp67, His68, His141, Asp212, and His270. Asp67 functions as the Proton acceptor in the catalytic mechanism.

The protein belongs to the RNase Z family. As to quaternary structure, homodimer. Zn(2+) is required as a cofactor.

It carries out the reaction Endonucleolytic cleavage of RNA, removing extra 3' nucleotides from tRNA precursor, generating 3' termini of tRNAs. A 3'-hydroxy group is left at the tRNA terminus and a 5'-phosphoryl group is left at the trailer molecule.. Zinc phosphodiesterase, which displays some tRNA 3'-processing endonuclease activity. Probably involved in tRNA maturation, by removing a 3'-trailer from precursor tRNA. This chain is Ribonuclease Z, found in Pediococcus pentosaceus (strain ATCC 25745 / CCUG 21536 / LMG 10740 / 183-1w).